The following is a 455-amino-acid chain: Argininosuccinate lyase (455 aa).

This sequence belongs to the lyase 1 family. Argininosuccinate lyase subfamily.

The protein resides in the cytoplasm. It catalyses the reaction 2-(N(omega)-L-arginino)succinate = fumarate + L-arginine. It participates in amino-acid biosynthesis; L-arginine biosynthesis; L-arginine from L-ornithine and carbamoyl phosphate: step 3/3. The chain is Argininosuccinate lyase from Shewanella baltica (strain OS195).